A 200-amino-acid polypeptide reads, in one-letter code: Large ribosomal subunit protein uL4 (200 aa).

The segment at glycine 38 to arginine 73 is disordered.

Belongs to the universal ribosomal protein uL4 family. In terms of assembly, part of the 50S ribosomal subunit.

One of the primary rRNA binding proteins, this protein initially binds near the 5'-end of the 23S rRNA. It is important during the early stages of 50S assembly. It makes multiple contacts with different domains of the 23S rRNA in the assembled 50S subunit and ribosome. Functionally, forms part of the polypeptide exit tunnel. The protein is Large ribosomal subunit protein uL4 of Ectopseudomonas mendocina (strain ymp) (Pseudomonas mendocina).